The primary structure comprises 155 residues: Catabolic 3-dehydroquinase (155 aa).

The active-site Proton acceptor is Tyr-24. Positions 75, 81, and 88 each coordinate substrate. His-101 serves as the catalytic Proton donor. Substrate is bound by residues 102 to 103 and Arg-112; that span reads VS.

The protein belongs to the type-II 3-dehydroquinase family. In terms of assembly, homododecamer. Adopts a ring-like structure, composed of an arrangement of two hexameric rings stacked on top of one another.

The catalysed reaction is 3-dehydroquinate = 3-dehydroshikimate + H2O. It functions in the pathway aromatic compound metabolism; 3,4-dihydroxybenzoate biosynthesis; 3,4-dihydroxybenzoate from 3-dehydroquinate: step 1/2. Functionally, is involved in the catabolism of quinate. Allows the utilization of quinate as carbon source via the beta-ketoadipate pathway. In Penicillium rubens (strain ATCC 28089 / DSM 1075 / NRRL 1951 / Wisconsin 54-1255) (Penicillium chrysogenum), this protein is Catabolic 3-dehydroquinase.